Reading from the N-terminus, the 573-residue chain is MMKFSVIVPTYNSEKYITELLNSLAKQDFPKTEFEVVVVDDCSTDQTLQIVEKYRNKLNLKVSQLETNSGGPGKPRNVALKQAEGEFVLFVDSDDYINKETLKDAAAFIDEHHSDVLLIKMKGVNGRGVPQSMFKETAPEVTLLNSRIIYTLSPTKIYRTALLKDNDIYFPEELKSAEDQLFTMKAYLNANRISVLSDKAYYYATKREGEHMSSAYVSPEDFYEVMRLIAVEILNADLEEAHKDQILAEFLNRHFSFSRTNGFSLKVKLEEQPQWINALGDFIQAVPERVDALVMSKLRPLLHYARAKDIDNYRTVEESYRQGQYYRFDIVDGKLNIQFNEGEPYFEGIDIAKPKVKMTAFKFDNHKIVTELTLNEFMIGEGHYDVRLKLHSRNKKHTMYVPLSVNANKQYRFNIMLEDIKAYLPKEKIWDVFLEVQIGTEVFEVRVGNQRNKYAYTAETSALIHLNNDFYRLTPYFTKDFNNISLYFTAITLTDSISMKLKGKNKIILTGLDRGYVFEEGMASVVLKDDMIMGMLSQTSENEVEILLSKDIKKRDFKNIVKLNTAHMTYSLK.

Residues P9, D41, N68, R76, 92 to 94 (DSD), R127, and E178 each bind UDP-N-acetyl-alpha-D-glucosamine. Position 94 (D94) interacts with Mn(2+). D179 acts as the Proton acceptor in catalysis. UDP-N-acetyl-alpha-D-glucosamine-binding positions include R207 and 211–213 (HMS).

This sequence belongs to the glycosyltransferase 2 family. As to quaternary structure, homotrimer. It depends on Mn(2+) as a cofactor.

It carries out the reaction 4-O-[(D-ribitylphospho)(n)-di{(2R)-glycerylphospho}]-N-acetyl-beta-D-mannosaminyl-(1-&gt;4)-N-acetyl-alpha-D-glucosaminyl di-trans,octa-cis-undecaprenyl diphosphate + n UDP-N-acetyl-alpha-D-glucosamine = 4-O-([2-N-acetyl-beta-D-glucosaminyl-1-D-ribitylphospho](n)-di{[2R]-1-glycerylphospho})-N-acetyl-beta-D-mannosaminyl-(1-&gt;4)-N-acetyl-alpha-D-glucosaminyl di-trans,octa-cis-undecaprenyl diphosphate + n UDP + n H(+). It functions in the pathway cell wall biogenesis; poly(ribitol phosphate) teichoic acid biosynthesis. Functionally, attaches beta-O-GlcNAc (beta-O-N-acetyl-D-glucosamine) residues to the C4 position of poly(RboP)-wall teichoic acids (WTAs). Mediates beta-lactam resistance in methicillin resistant Staphylococcus aureus (MRSA) strains. This chain is Poly(ribitol-phosphate) beta-N-acetylglucosaminyltransferase TarS, found in Staphylococcus aureus (strain Mu50 / ATCC 700699).